The chain runs to 396 residues: MSKSKFERKKPHVNVGTIGHVDHGKTTLTAAMTVVLAEAFGGDARAFDQIDNAPEEKARGITIATAHVEYETSERHYAHVDCPGHADYVKNMITGAAQMDGAILVVSAADGPMPQTREHILLARQVGVPYIVVYLNKADMVDDEELLELVEMEVRELLSDYDFPGDDTPVITGSALKALEGDDSEIGKPSIIKLAEAMDEYIPTPERPVDQPFLMPIEDVFSISGRGTVVTGRVERGVIKTGEEVEIVGLKETQKTTCTGVEMFRKMLDQGEAGDNIGALLRGTKRDEVERGQVLCKPGSITPHTKFECEVYVLSKDEGGRHTPFFNGYRPQFYFRTTDVTGSCELPEGVEMVMPGDNVKMTVSLIAPIAMEDGLRFAVREGGRTVGAGVVSKIIE.

Residues 10–206 (KPHVNVGTIG…AMDEYIPTPE (197 aa)) form the tr-type G domain. Positions 19–26 (GHVDHGKT) are G1. 19–26 (GHVDHGKT) provides a ligand contact to GTP. Thr-26 lines the Mg(2+) pocket. Residues 60 to 64 (GITIA) form a G2 region. A G3 region spans residues 81 to 84 (DCPG). Residues 81–85 (DCPGH) and 136–139 (NKAD) contribute to the GTP site. Positions 136 to 139 (NKAD) are G4. A G5 region spans residues 174–176 (SAL).

This sequence belongs to the TRAFAC class translation factor GTPase superfamily. Classic translation factor GTPase family. EF-Tu/EF-1A subfamily. In terms of assembly, monomer.

The protein localises to the cytoplasm. The catalysed reaction is GTP + H2O = GDP + phosphate + H(+). In terms of biological role, GTP hydrolase that promotes the GTP-dependent binding of aminoacyl-tRNA to the A-site of ribosomes during protein biosynthesis. The sequence is that of Elongation factor Tu from Alkalilimnicola ehrlichii (strain ATCC BAA-1101 / DSM 17681 / MLHE-1).